The following is a 147-amino-acid chain: Small ribosomal subunit protein uS5 (147 aa).

The 64-residue stretch at 9 to 72 (FEEVIVDIGR…DDAFKNIIHV (64 aa)) folds into the S5 DRBM domain.

It belongs to the universal ribosomal protein uS5 family. Part of the 30S ribosomal subunit. Contacts proteins S4 and S8.

Its function is as follows. With S4 and S12 plays an important role in translational accuracy. Functionally, located at the back of the 30S subunit body where it stabilizes the conformation of the head with respect to the body. The sequence is that of Small ribosomal subunit protein uS5 from Campylobacter curvus (strain 525.92).